The sequence spans 179 residues: Bifunctional protein PyrR (179 aa).

A PRPP-binding motif is present at residues 99–111 (VILIDDVLYTGRT).

This sequence belongs to the purine/pyrimidine phosphoribosyltransferase family. PyrR subfamily. Homodimer and homohexamer; in equilibrium.

It carries out the reaction UMP + diphosphate = 5-phospho-alpha-D-ribose 1-diphosphate + uracil. In terms of biological role, regulates transcriptional attenuation of the pyrimidine nucleotide (pyr) operon by binding in a uridine-dependent manner to specific sites on pyr mRNA. This disrupts an antiterminator hairpin in the RNA and favors formation of a downstream transcription terminator, leading to a reduced expression of downstream genes. Functionally, also displays a weak uracil phosphoribosyltransferase activity which is not physiologically significant. In Latilactobacillus sakei subsp. sakei (strain 23K) (Lactobacillus sakei subsp. sakei), this protein is Bifunctional protein PyrR.